The chain runs to 841 residues: Protein translocase subunit SecA (841 aa).

ATP-binding positions include Gln86, 104–108 (GEGKT), and Asp493. A disordered region spans residues 788 to 822 (EEVAEGKAVRPSANGQEDKKAKRKPVRKAENIGRN). Residues Cys825, Cys827, Cys836, and Cys837 each contribute to the Zn(2+) site.

This sequence belongs to the SecA family. As to quaternary structure, monomer and homodimer. Part of the essential Sec protein translocation apparatus which comprises SecA, SecYEG and auxiliary proteins SecDF. Other proteins may also be involved. Zn(2+) is required as a cofactor.

It is found in the cell membrane. Its subcellular location is the cytoplasm. It catalyses the reaction ATP + H2O + cellular proteinSide 1 = ADP + phosphate + cellular proteinSide 2.. Its function is as follows. Part of the Sec protein translocase complex. Interacts with the SecYEG preprotein conducting channel. Has a central role in coupling the hydrolysis of ATP to the transfer of proteins into and across the cell membrane, serving as an ATP-driven molecular motor driving the stepwise translocation of polypeptide chains across the membrane. This chain is Protein translocase subunit SecA, found in Shouchella clausii (strain KSM-K16) (Alkalihalobacillus clausii).